The primary structure comprises 556 residues: MEKSMIKLKSTVIVVLFALLYLLPLNGRWLWSPDETRYAEISREMLQRGDWIVPHLLDIRYFEKPVAGYWLNNMSQWLLGHTNFSVRFASVFSTALSALLVFWLAMMLWKNQRTALLAATIYLTSLLVYGIGTYSVLDPMVTLWMTAALFSHAMILRAKLTRERLLAWGLMGLACGMGFMTKGFLALALPVISVLPVALAQKRIKELLLFGPLAIVVAVLLSAPWALAVHAREADYWHYFFWIEHIQRFAEDDAQHKAPFWYYLPFLIVGTFPWLALLPGALRSGWTERKVNPERFFLLCWMVMPLLFFSIAKGKLLTYILPCFAPLALLMAAWISGLAPVVRERLLRINSWLNIVFGGVLGLAVAALGLGIIVPHFYQPGEGLTIISGIVCFIGWIAFAAVSLRKQQTWGYLVAGCPLFLALLVGGSIPASVVDSKNPQTFIRSHQPLLEDSRYVLSDEVGLAAGLAWELKRSDITLFKARGELNYGLDYADAADRFVDEGAFPAWLADKRRSGNVALVLKTDRDSDDEYRNLPAPNQLRKSHRYVLLFYKQVVP.

A run of 10 helical transmembrane segments spans residues 88–108 (FASV…AMML), 116–136 (LLAA…TYSV), 179–199 (FMTK…PVAL), 207–227 (LLLF…PWAL), 258–278 (APFW…LALL), 296–316 (FFLL…KGKL), 319–339 (YILP…SGLA), 355–375 (IVFG…IIVP), 384–404 (LTII…AVSL), and 410–430 (WGYL…GSIP).

The protein belongs to the glycosyltransferase 83 family.

The protein resides in the cell inner membrane. It carries out the reaction 4-amino-4-deoxy-alpha-L-arabinopyranosyl di-trans,octa-cis-undecaprenyl phosphate + lipid IVA = lipid IIA + di-trans,octa-cis-undecaprenyl phosphate.. Its pathway is lipopolysaccharide metabolism; 4-amino-4-deoxy-beta-L-arabinose-lipid A biosynthesis. Its function is as follows. Catalyzes the transfer of the L-Ara4N moiety of the glycolipid undecaprenyl phosphate-alpha-L-Ara4N to lipid A. The modified arabinose is attached to lipid A and is required for resistance to polymyxin and cationic antimicrobial peptides. This chain is Undecaprenyl phosphate-alpha-4-amino-4-deoxy-L-arabinose arabinosyl transferase, found in Pectobacterium atrosepticum (strain SCRI 1043 / ATCC BAA-672) (Erwinia carotovora subsp. atroseptica).